The sequence spans 32 residues: Dermaseptin-DA4 (32 aa).

Expressed by the skin glands.

It localises to the secreted. The protein resides in the target cell membrane. Antimicrobial peptide with activity against Gram-negative bacteria, but not against Gram-positive bacteria. Active against E.coli (MIC=5 uM), and P.aeruginosa (MIC=40 uM). Acts by disrupting cell membranes. Is able to depolarize membranes of Gram-positive and Gram-negative bacteria. Also acts as a potent chemoattractant for human leukocytes and activates them mainly through a GPCR, possibly FPRL1 coupled to the ERK1/2 MAPK pathway. Is unstructured in water but become helical upon binding to anionic lipids. In contrast to most dermaseptins, is not structured in the presence of zwitterionic lipids. Does not show hemolytic activity. This is Dermaseptin-DA4 from Agalychnis dacnicolor (Giant Mexican leaf frog).